Reading from the N-terminus, the 204-residue chain is Ras-related and estrogen-regulated growth inhibitor-like protein (204 aa).

Residues 1-204 are small GTPase-like; that stretch reads MNDVKLTVLG…NVFGKRRKSV (204 aa). GTP-binding positions include 10 to 17, 57 to 63, and 122 to 125; these read GGEGTGKS, DPCSQPQ, and NKQD.

The protein belongs to the small GTPase superfamily. Ras family.

The enzyme catalyses GTP + H2O = GDP + phosphate + H(+). Functionally, binds GDP/GTP and may possess intrinsic GTPase activity. The protein is Ras-related and estrogen-regulated growth inhibitor-like protein (RERGL) of Bos taurus (Bovine).